The chain runs to 317 residues: Transaldolase 1 (317 aa).

Lys-132 (schiff-base intermediate with substrate) is an active-site residue.

It belongs to the transaldolase family. Type 1 subfamily. Homodimer.

Its subcellular location is the cytoplasm. It carries out the reaction D-sedoheptulose 7-phosphate + D-glyceraldehyde 3-phosphate = D-erythrose 4-phosphate + beta-D-fructose 6-phosphate. It participates in carbohydrate degradation; pentose phosphate pathway; D-glyceraldehyde 3-phosphate and beta-D-fructose 6-phosphate from D-ribose 5-phosphate and D-xylulose 5-phosphate (non-oxidative stage): step 2/3. Functionally, transaldolase is important for the balance of metabolites in the pentose-phosphate pathway. This Shigella sonnei (strain Ss046) protein is Transaldolase 1.